The following is a 1262-amino-acid chain: Zinc finger protein 592 (1262 aa).

Positions 23–45 (SLDAKEAIQAPSEENESPLKSSG) are disordered. S78, S142, S145, and S146 each carry phosphoserine. Disordered regions lie at residues 122–174 (SFTS…PPPG), 200–278 (KKEP…AHSK), and 294–494 (VANV…ASTP). Residues K200 and K204 each participate in a glycyl lysine isopeptide (Lys-Gly) (interchain with G-Cter in SUMO2) cross-link. 2 stretches are compositionally biased toward basic and acidic residues: residues 213-232 (QQEH…DLDS) and 298-308 (TKEDQPGHTKD). Over residues 343–367 (PSDSPRSICSDSSSKGSPSVAASSP) the composition is skewed to low complexity. A compositionally biased stretch (polar residues) spans 454-463 (IKTSDSSSPC). The span at 484 to 494 (QQSTAPQASTP) shows a compositional bias: low complexity. At S529 the chain carries Phosphoserine. K546 participates in a covalent cross-link: Glycyl lysine isopeptide (Lys-Gly) (interchain with G-Cter in SUMO2). S573 bears the Phosphoserine mark. Residues 587–612 (YCCLECGDAFALEKSLSQHYSRRSVH) form a C2H2-type 1; atypical zinc finger. A C2H2-type 2; atypical zinc finger spans residues 615–639 (VLCTLCSKTLLFFNKCSLLRHARDH). S691 bears the Phosphoserine mark. The segment at 711–731 (TKCPECHKQMRDYMVLATHFQ) adopts a C2H2-type 3; degenerate zinc-finger fold. The C2H2-type 4 zinc-finger motif lies at 740–764 (LTCQVCQMLLPNQCSFCAHQRIHAH). The C2H2-type 5; atypical zinc finger occupies 768 to 790 (YCCPECGVLCRSAYFQTHVKENC). 3 consecutive C2H2-type zinc fingers follow at residues 799-822 (YRCI…QERH), 827-850 (HKCA…TTQH), and 892-915 (FKCP…KNTH). Positions 924–935 (LSSLQSSTDTSS) are enriched in low complexity. Residues 924-979 (LSSLQSSTDTSSNRPGSRAPAEPPATNVAARGSSLTAGRWGRPEAHRRAEARPRMR) form a disordered region. The span at 964–976 (GRPEAHRRAEARP) shows a compositional bias: basic and acidic residues. 2 consecutive C2H2-type zinc fingers follow at residues 983–1006 (WTCQ…KKSH) and 1013–1036 (YPCR…RNNH). A C2H2-type 11; atypical zinc finger spans residues 1043-1069 (YTCGYCTEDSPSFPRPSLLESHISLMH). S1089 carries the phosphoserine modification. The C2H2-type 12; atypical zinc-finger motif lies at 1124–1146 (FQCAKCTFATDSELEFQSHIPQH). A C2H2-type 13 zinc finger spans residues 1153–1176 (AQCLLCGLCYTSTSSLNRHLFIVH). A phosphoserine mark is found at S1198 and S1202. The disordered stretch occupies residues 1222–1262 (PLVTDLGGQQGLALDEDSAQDPQNQPQASQDQNSHALSPQV). Residues 1241–1262 (QDPQNQPQASQDQNSHALSPQV) show a composition bias toward polar residues.

This sequence belongs to the krueppel C2H2-type zinc-finger protein family. In terms of assembly, interacts with ZMYND8. Expressed in the brain.

It localises to the nucleus. Functionally, may be involved in transcriptional regulation. The chain is Zinc finger protein 592 (Znf592) from Mus musculus (Mouse).